A 270-amino-acid chain; its full sequence is NADPH-dependent 7-cyano-7-deazaguanine reductase (270 aa).

79-81 (IES) is a binding site for substrate. 81-82 (SK) is a binding site for NADPH. Cys-177 acts as the Thioimide intermediate in catalysis. Asp-184 functions as the Proton donor in the catalytic mechanism. 216–217 (HE) lines the substrate pocket. An NADPH-binding site is contributed by 245-246 (RG).

Belongs to the GTP cyclohydrolase I family. QueF type 2 subfamily. Homodimer.

The protein resides in the cytoplasm. The enzyme catalyses 7-aminomethyl-7-carbaguanine + 2 NADP(+) = 7-cyano-7-deazaguanine + 2 NADPH + 3 H(+). It participates in tRNA modification; tRNA-queuosine biosynthesis. Functionally, catalyzes the NADPH-dependent reduction of 7-cyano-7-deazaguanine (preQ0) to 7-aminomethyl-7-deazaguanine (preQ1). In Acinetobacter baumannii (strain SDF), this protein is NADPH-dependent 7-cyano-7-deazaguanine reductase.